We begin with the raw amino-acid sequence, 662 residues long: Chaperone protein dnaK1 (662 aa).

The residue at position 198 (Thr198) is a Phosphothreonine; by autocatalysis. Residues 630–662 form a disordered region; sequence DWDDDPWAAPSGPPRGRSLNRRDRDPWDDDFYR. Residues 649-662 show a composition bias toward basic and acidic residues; the sequence is NRRDRDPWDDDFYR.

The protein belongs to the heat shock protein 70 family.

In terms of biological role, acts as a chaperone. This Parasynechococcus marenigrum (strain WH8102) protein is Chaperone protein dnaK1 (dnaK1).